Here is an 82-residue protein sequence, read N- to C-terminus: Large ribosomal subunit protein uL23 (82 aa).

Belongs to the universal ribosomal protein uL23 family. In terms of assembly, part of the 50S ribosomal subunit. Contacts protein L29.

Functionally, binds to 23S rRNA. One of the proteins that surrounds the polypeptide exit tunnel on the outside of the ribosome. This is Large ribosomal subunit protein uL23 from Methanosarcina acetivorans (strain ATCC 35395 / DSM 2834 / JCM 12185 / C2A).